The sequence spans 281 residues: Probable thioesterase gloN (281 aa).

A disordered region spans residues 207 to 233 (LDDGSNNSRDLNETSPTETSNDSETQA). Residues 210–232 (GSNNSRDLNETSPTETSNDSETQ) are compositionally biased toward polar residues.

This sequence belongs to the AMT4 thioesterase family.

It functions in the pathway mycotoxin biosynthesis. In terms of biological role, probable thioesterase; part of the gene cluster that mediates the biosynthesis of pneumocandins, lipohexapeptides of the echinocandin family that prevent fungal cell wall formation by non-competitive inhibition of beta-1,3-glucan synthase. The 10,12-dimethylmyristoyl side chain is synthesized by the reducing polyketide synthase gloL/GLPKS4. The thioesterase gloN/GLHYD exclusively interacts with gloL/GLPKS4 to maintain turnover of the polyketide side chain. The 10R,12S-dimethylmyristic acid is then transferred to the first thiolation domain of the nonribosomal peptide synthetase gloA/GLNRPS4 by the acyl-AMP ligase gloD/GLligase, followed by its acylation to L-ornithine to trigger elongation of the cyclic hexapeptide. L-ornithine, 4R-hydroxyl-L-proline (generated from L-proline by the dioxygenase gloF/GLOXY2), 3S-hydroxyl-L-homotyrosine (generated by gloG/GLHtyB, gloH/GLHtyA, gloI/GLHtyC, gloJ/GLHtyD and hydroxylated at C-3 by the dioxygenase gloM/GLOXY1), 3R-hydroxyl-L-glutamine (generated from L-glutamine probably by the dioxygenase gloE/GLOXY3) and 3S-hydroxyl-L-proline (generated from L-proline by the dioxygenase gloF/GLOXY2 to yield pneumocandin B0), or 3S-hydroxyl-4S-methyl-L-proline (generated from L-leucine by the dioxygenase gloC/GLOXY4 to yield pneumocandin A0) are sequentially added to the growing chain. The last C domain of gloA/GLNRPS4 is proposed to be responsible for cyclization by condensation to form the peptide bond between L-ornithine and 3S-hydroxyl-4S-methyl-L-proline (for pneumocandin A0) or 3S-hydroxyl-L-proline (for pneumocandin B0). Finally, the subsequent C-4 hydroxylation of 3S-hydroxyl-L-homotyrosine and L-ornithine dihydroxylation at C-4 and C-5 are performed by the cytochrome P450 monooxygenases gloP/GLP450-1 and gloO/GLP450-2, respectively. The sequence is that of Probable thioesterase gloN from Glarea lozoyensis (strain ATCC 20868 / MF5171).